Consider the following 149-residue polypeptide: Large ribosomal subunit protein bL9 (149 aa).

This sequence belongs to the bacterial ribosomal protein bL9 family.

Binds to the 23S rRNA. This Cutibacterium acnes (strain DSM 16379 / KPA171202) (Propionibacterium acnes) protein is Large ribosomal subunit protein bL9.